Consider the following 132-residue polypeptide: Fatty acid-binding protein 9 (132 aa).

6 positions are modified to phosphoserine: serine 13, serine 14, serine 40, serine 42, serine 44, and serine 91.

It belongs to the calycin superfamily. Fatty-acid binding protein (FABP) family. Testis.

The protein localises to the cytoplasm. The protein is Fatty acid-binding protein 9 (Fabp9) of Mus musculus (Mouse).